We begin with the raw amino-acid sequence, 572 residues long: MSPLTRTVAIKKTVKVLSKCQSGREYTQKFLQRAYSTSHANSTYYSRTKLFISSHSKALNIALLSGSLLLTYSYYSPKKILSLDTINGIKDYSTNTSGNINMPSPNPKGTETQKSQRSQNDQSVLILNDSKIEAKLHDREESHFVNRGTGIFRYDVAQLPSNHPIEDDHVEQIITIPIESEDGKSIEKDLYFFGIFDGHGGPFTSEKLSKDLVRYVAYQLGQVYDQNKTVFHSDPNQLIDSAISKGFLKLDNDLVIESFRKLFQDPNNTNIANTLPAISGSCALLSLYNSTNSILKVAVTGDSRALICGLDNEGNWTVKSLSTDQTGDNLDEVRRIRKEHPGEPNVIRNGRILGSLQPSRAFGDYRYKIKEVDGKPLSDLPEVAKLYFRREPRDFKTPPYVTAEPVITSAKIGENTKFMVMGSDGLFELLTNEEIASLVIRWMDKNMNLAPVKAEPGKLPKVIDVSEDKEAQRPAFRYKDNNSSSPSGSNPEYLIEDKNVATHLIRNALSAGGRKEYVSALVSIPSPMSRRYRDDLTVTVAFFGDSGTPSIVSNATSIVMNPEATTKPKPRL.

A disordered region spans residues asparagine 95 to glutamine 122. The 391-residue stretch at arginine 153–phenylalanine 543 folds into the PPM-type phosphatase domain. Mn(2+) is bound by residues aspartate 197, glycine 198, aspartate 424, and aspartate 480. Residues glutamate 470–aspartate 480 are compositionally biased toward basic and acidic residues. Residues glutamate 470 to glutamate 492 are disordered. Low complexity predominate over residues asparagine 481 to proline 491.

This sequence belongs to the PP2C family. The cofactor is Mg(2+). Requires Mn(2+) as cofactor. Post-translationally, processed by mitochondrial inner membrane protease (IMP) complex and released to the intermembrane space.

Its subcellular location is the mitochondrion intermembrane space. The enzyme catalyses O-phospho-L-seryl-[pyruvate dehydrogenase E1 alpha subunit] + H2O = L-seryl-[pyruvate dehydrogenase E1 alpha subunit] + phosphate. Functionally, catalyzes the dephosphorylation and concomitant reactivation of the E1 alpha subunit (PDA1) of the pyruvate dehydrogenase complex. The sequence is that of [Pyruvate dehydrogenase [acetyl-transferring]]-phosphatase 1, mitochondrial (PTC5) from Saccharomyces cerevisiae (strain ATCC 204508 / S288c) (Baker's yeast).